The sequence spans 346 residues: Elongation factor Ts (346 aa).

An involved in Mg(2+) ion dislocation from EF-Tu region spans residues 80-83; that stretch reads TDFV.

This sequence belongs to the EF-Ts family.

Its subcellular location is the cytoplasm. Its function is as follows. Associates with the EF-Tu.GDP complex and induces the exchange of GDP to GTP. It remains bound to the aminoacyl-tRNA.EF-Tu.GTP complex up to the GTP hydrolysis stage on the ribosome. In Streptococcus pyogenes serotype M1, this protein is Elongation factor Ts.